Consider the following 190-residue polypeptide: dCTP deaminase, dUMP-forming (190 aa).

DCTP is bound by residues 101-106 (KSSLGR), D119, 127-129 (TLE), Q148, Y162, K170, and Q174. E129 acts as the Proton donor/acceptor in catalysis. The tract at residues 160-190 (HPYGSSRAGSKYQGQRGPTPSRSCQNFIRST) is disordered. The span at 171-190 (YQGQRGPTPSRSCQNFIRST) shows a compositional bias: polar residues.

Belongs to the dCTP deaminase family. As to quaternary structure, homotrimer.

The enzyme catalyses dCTP + 2 H2O = dUMP + NH4(+) + diphosphate. The protein operates within pyrimidine metabolism; dUMP biosynthesis; dUMP from dCTP: step 1/1. Functionally, bifunctional enzyme that catalyzes both the deamination of dCTP to dUTP and the hydrolysis of dUTP to dUMP without releasing the toxic dUTP intermediate. The sequence is that of dCTP deaminase, dUMP-forming from Mycobacterium bovis (strain ATCC BAA-935 / AF2122/97).